Reading from the N-terminus, the 270-residue chain is Tetraspanin-17 (270 aa).

Residues 1–19 (MPGKHQQFQDPEVGCCGKY) lie on the Cytoplasmic side of the membrane. The chain crosses the membrane as a helical span at residues 20–40 (FLFGFNIVFWVLGALFLAIGL). Over 41 to 63 (WAWGEKGVLSNISGLTDLGGLDP) the chain is Extracellular. The N-linked (GlcNAc...) asparagine glycan is linked to Asn-51. A helical membrane pass occupies residues 64 to 84 (VWLFVVIGGIMSVLGFAGCIG). Over 85–94 (ALRENTFLLK) the chain is Cytoplasmic. The chain crosses the membrane as a helical span at residues 95 to 115 (FFSVFLGLIFFLELAAGILAF). Over 116-234 (VFKDWIRDQL…GQFEKWLQDN (119 aa)) the chain is Extracellular. 4 disulfides stabilise this stretch: Cys-155-Cys-223, Cys-156-Cys-188, Cys-172-Cys-182, and Cys-189-Cys-202. Asn-171 carries an N-linked (GlcNAc...) asparagine glycan. The chain crosses the membrane as a helical span at residues 235-255 (LIVVAGVLVAIALLQICGICL). Residues 256–270 (AQNLVSDIEAVKANW) are Cytoplasmic-facing.

The protein belongs to the tetraspanin (TM4SF) family. Interacts with ADAM10; the interaction influences ADAM10 substrate specificity, endocytosis and turnover.

The protein resides in the cell membrane. Its function is as follows. Part of TspanC8 subgroup, composed of 6 members that interact with the transmembrane metalloprotease ADAM10. This interaction is required for ADAM10 exit from the endoplasmic reticulum and for enzymatic maturation and trafficking to the cell surface as well as substrate specificity. Different TspanC8/ADAM10 complexes have distinct substrates. Seems to regulate VE-cadherin expression in endothelial cells probably through interaction with ADAM10, promoting leukocyte transmigration. The chain is Tetraspanin-17 (Tspan17) from Rattus norvegicus (Rat).